Reading from the N-terminus, the 151-residue chain is Transcriptional repressor NrdR (151 aa).

A zinc finger spans residues 3–34; sequence CPYCGYIEDRVIDSRPTDEGSAIRRRRECSKC. One can recognise an ATP-cone domain in the interval 49–139; the sequence is IMVIKKDKSR…VYRQFKDINT (91 aa).

The protein belongs to the NrdR family. Zn(2+) serves as cofactor.

In terms of biological role, negatively regulates transcription of bacterial ribonucleotide reductase nrd genes and operons by binding to NrdR-boxes. This Acetivibrio thermocellus (strain ATCC 27405 / DSM 1237 / JCM 9322 / NBRC 103400 / NCIMB 10682 / NRRL B-4536 / VPI 7372) (Clostridium thermocellum) protein is Transcriptional repressor NrdR.